We begin with the raw amino-acid sequence, 91 residues long: Uteroglobin (91 aa).

Positions 1 to 21 (MKLAVTLTLVTLALCCSSASA) are cleaved as a signal peptide.

It belongs to the secretoglobin family. As to quaternary structure, antiparallel homodimer; disulfide-linked. Interaction with LMBR1L has been observed in PubMed:16423471, but not in PubMed:23964685. Club cells (nonciliated cells of the surface epithelium of the pulmonary airways).

Its subcellular location is the secreted. Its function is as follows. Binds phosphatidylcholine, phosphatidylinositol, polychlorinated biphenyls (PCB) and weakly progesterone, potent inhibitor of phospholipase A2. The chain is Uteroglobin (SCGB1A1) from Homo sapiens (Human).